A 135-amino-acid polypeptide reads, in one-letter code: Small ribosomal subunit protein uS12 (135 aa).

A disordered region spans residues 1–29 (MPTINQLVRKGREKVEKKSKAPALQGNPQ). 3-methylthioaspartic acid is present on Asp89. Residues 106-135 (GVKDRKQSRSKYGAKRPKPGQAAATTGKKK) form a disordered region. Residues 113–123 (SRSKYGAKRPK) show a composition bias toward basic residues.

Belongs to the universal ribosomal protein uS12 family. As to quaternary structure, part of the 30S ribosomal subunit. Contacts proteins S8 and S17. May interact with IF1 in the 30S initiation complex.

Its function is as follows. With S4 and S5 plays an important role in translational accuracy. Functionally, interacts with and stabilizes bases of the 16S rRNA that are involved in tRNA selection in the A site and with the mRNA backbone. Located at the interface of the 30S and 50S subunits, it traverses the body of the 30S subunit contacting proteins on the other side and probably holding the rRNA structure together. The combined cluster of proteins S8, S12 and S17 appears to hold together the shoulder and platform of the 30S subunit. This Sulfurihydrogenibium sp. (strain YO3AOP1) protein is Small ribosomal subunit protein uS12.